The chain runs to 335 residues: Biotin synthase (335 aa).

A Radical SAM core domain is found at 51–278 (NTVQLSSLLS…LAKVRLSAGR (228 aa)). Residues Cys-66, Cys-70, and Cys-73 each coordinate [4Fe-4S] cluster. 4 residues coordinate [2Fe-2S] cluster: Cys-110, Cys-141, Cys-201, and Arg-273.

This sequence belongs to the radical SAM superfamily. Biotin synthase family. In terms of assembly, homodimer. It depends on [4Fe-4S] cluster as a cofactor. Requires [2Fe-2S] cluster as cofactor.

The catalysed reaction is (4R,5S)-dethiobiotin + (sulfur carrier)-SH + 2 reduced [2Fe-2S]-[ferredoxin] + 2 S-adenosyl-L-methionine = (sulfur carrier)-H + biotin + 2 5'-deoxyadenosine + 2 L-methionine + 2 oxidized [2Fe-2S]-[ferredoxin]. It participates in cofactor biosynthesis; biotin biosynthesis; biotin from 7,8-diaminononanoate: step 2/2. Its function is as follows. Catalyzes the conversion of dethiobiotin (DTB) to biotin by the insertion of a sulfur atom into dethiobiotin via a radical-based mechanism. The polypeptide is Biotin synthase (Bordetella pertussis (strain Tohama I / ATCC BAA-589 / NCTC 13251)).